We begin with the raw amino-acid sequence, 444 residues long: Histidinol dehydrogenase (444 aa).

NAD(+) is bound by residues Tyr135, Gln199, and Asn227. Substrate is bound by residues Thr250, Gln272, and His275. Gln272 and His275 together coordinate Zn(2+). Active-site proton acceptor residues include Glu341 and His342. Residues His342, Asp375, Glu429, and His434 each contribute to the substrate site. Asp375 provides a ligand contact to Zn(2+). Residue His434 coordinates Zn(2+).

This sequence belongs to the histidinol dehydrogenase family. Zn(2+) is required as a cofactor.

The catalysed reaction is L-histidinol + 2 NAD(+) + H2O = L-histidine + 2 NADH + 3 H(+). Its pathway is amino-acid biosynthesis; L-histidine biosynthesis; L-histidine from 5-phospho-alpha-D-ribose 1-diphosphate: step 9/9. Functionally, catalyzes the sequential NAD-dependent oxidations of L-histidinol to L-histidinaldehyde and then to L-histidine. The polypeptide is Histidinol dehydrogenase (hisD) (Mycobacterium bovis (strain ATCC BAA-935 / AF2122/97)).